Here is a 254-residue protein sequence, read N- to C-terminus: PSME3-interacting protein (254 aa).

At methionine 1 the chain carries N-acetylmethionine. A Phosphoserine modification is found at serine 17. The segment covering 22 to 39 has biased composition (basic and acidic residues); the sequence is DERRKRRQEEWEKVRKPE. Positions 22–52 are disordered; the sequence is DERRKRRQEEWEKVRKPEDPEECPEEVYDPR. Residue lysine 139 is modified to N6-acetyllysine. The segment at 155-195 is disordered; it reads GAVKHKSSESGNSVKRLKPDPEPDDKNQEPSSCKSLGNTSL. Positions 171-182 are enriched in basic and acidic residues; the sequence is LKPDPEPDDKNQ. Over residues 183–195 the composition is skewed to polar residues; that stretch reads EPSSCKSLGNTSL. The tract at residues 201–254 is interaction with PSME3; sequence HCPSAAVCIGILPGLGAYSGSSDSESSSDSEGTINATGKIVSSIFRTNTFLEAP. 2 positions are modified to phosphoserine; by CK2: serine 222 and serine 228.

Interacts (via C-terminus) with both free and 20S proteasome-bound forms of the proteasome activator complex subunit PSME3; the interaction is direct. Post-translationally, phosphorylation by CK2 stabilizes the interaction with PSME3.

It is found in the nucleus. Promotes the association of the proteasome activator complex subunit PSME3 with the 20S proteasome and regulates its activity. Inhibits PSME3-mediated degradation of some proteasome substrates, probably by affecting their diffusion rate into the catalytic chamber of the proteasome. Also inhibits the interaction of PSME3 with COIL, inhibits accumulation of PSME3 in Cajal bodies and positively regulates the number of Cajal bodies in the nucleus. The chain is PSME3-interacting protein from Homo sapiens (Human).